We begin with the raw amino-acid sequence, 567 residues long: Glutamate--tRNA ligase (567 aa).

A 'HIGH' region motif is present at residues proline 106 to asparagine 116.

It belongs to the class-I aminoacyl-tRNA synthetase family. Glutamate--tRNA ligase type 2 subfamily.

The protein resides in the cytoplasm. It carries out the reaction tRNA(Glu) + L-glutamate + ATP = L-glutamyl-tRNA(Glu) + AMP + diphosphate. Functionally, catalyzes the attachment of glutamate to tRNA(Glu) in a two-step reaction: glutamate is first activated by ATP to form Glu-AMP and then transferred to the acceptor end of tRNA(Glu). This Sulfolobus acidocaldarius (strain ATCC 33909 / DSM 639 / JCM 8929 / NBRC 15157 / NCIMB 11770) protein is Glutamate--tRNA ligase.